The primary structure comprises 291 residues: D-alanine--D-alanine ligase (291 aa).

One can recognise an ATP-grasp domain in the interval 99-291; that stretch reads KRIVKSLGIN…FKKLISIIIT (193 aa). An ATP-binding site is contributed by 125–179; sequence EWNKFPAVVKPVREGSSVGLKIVESLEELKEYALDLLKKTERVMVEEFVEGRDMT. Residues aspartate 245, glutamate 258, and asparagine 260 each coordinate Mg(2+).

Belongs to the D-alanine--D-alanine ligase family. It depends on Mg(2+) as a cofactor. Mn(2+) serves as cofactor.

It localises to the cytoplasm. It carries out the reaction 2 D-alanine + ATP = D-alanyl-D-alanine + ADP + phosphate + H(+). It functions in the pathway cell wall biogenesis; peptidoglycan biosynthesis. Cell wall formation. In Aquifex aeolicus (strain VF5), this protein is D-alanine--D-alanine ligase.